The primary structure comprises 251 residues: Flap endonuclease Xni (251 aa).

Aspartate 104 contacts Mg(2+). In terms of domain architecture, 5'-3' exonuclease spans 160-249 (VLPRQLPDYW…IDGNLQQLRL (90 aa)). K(+) is bound by residues leucine 171, alanine 172, proline 180, valine 182, and isoleucine 185. An interaction with DNA region spans residues 184-189 (GIGPKS).

Belongs to the Xni family. Requires Mg(2+) as cofactor. It depends on K(+) as a cofactor.

Has flap endonuclease activity. During DNA replication, flap endonucleases cleave the 5'-overhanging flap structure that is generated by displacement synthesis when DNA polymerase encounters the 5'-end of a downstream Okazaki fragment. The chain is Flap endonuclease Xni from Salmonella heidelberg (strain SL476).